The chain runs to 425 residues: AP-3 complex subunit mu (425 aa).

Residues 175–423 form the MHD domain; it reads TNEFFIHVLE…TIIAQNVSFR (249 aa).

This sequence belongs to the adaptor complexes medium subunit family.

It localises to the cytoplasm. The protein resides in the cytoskeleton. Its subcellular location is the microtubule organizing center. It is found in the spindle pole body. The protein localises to the membrane. It localises to the golgi apparatus. The protein resides in the cytoplasmic vesicle membrane. Part of the AP-3 complex, an adaptor-related complex which is not clathrin-associated. The complex is associated with the Golgi region as well as more peripheral structures. It facilitates the budding of vesicles from the Golgi membrane and may be directly involved in trafficking to the vacuole. In Schizosaccharomyces pombe (strain 972 / ATCC 24843) (Fission yeast), this protein is AP-3 complex subunit mu (apm3).